Here is a 776-residue protein sequence, read N- to C-terminus: DNA ligase (776 aa).

NAD(+) is bound by residues 31–35 (DAEYD), 80–81 (SL), and Glu112. The N6-AMP-lysine intermediate role is filled by Lys114. 4 residues coordinate NAD(+): Arg135, Glu172, Lys288, and Lys312. Cys406, Cys409, Cys436, and Cys442 together coordinate Zn(2+). One can recognise a BRCT domain in the interval 693-776 (AEGLPLAGQT…VFLDEQGIAI (84 aa)).

The protein belongs to the NAD-dependent DNA ligase family. LigA subfamily. It depends on Mg(2+) as a cofactor. Requires Mn(2+) as cofactor.

It carries out the reaction NAD(+) + (deoxyribonucleotide)n-3'-hydroxyl + 5'-phospho-(deoxyribonucleotide)m = (deoxyribonucleotide)n+m + AMP + beta-nicotinamide D-nucleotide.. In terms of biological role, DNA ligase that catalyzes the formation of phosphodiester linkages between 5'-phosphoryl and 3'-hydroxyl groups in double-stranded DNA using NAD as a coenzyme and as the energy source for the reaction. It is essential for DNA replication and repair of damaged DNA. The protein is DNA ligase of Pseudomonas putida (strain W619).